The primary structure comprises 339 residues: Prepilin peptidase EppA (339 aa).

10 helical membrane passes run 3 to 23, 27 to 47, 48 to 68, 75 to 95, 99 to 119, 125 to 145, 146 to 166, 180 to 200, 204 to 224, and 319 to 339; these read LLNV…ITDI, IIPH…GYYY, FGFN…ILSI, VKLF…VFYI, ILYL…YKIL, DIIP…YFIN, IYEI…SIFV, LGYL…TYFI, VLLT…VIYA, and FVPF…LAII.

The protein belongs to the peptidase A24 family.

The protein localises to the cell membrane. In terms of biological role, peptidase that processes the N-terminus of prepilins. In Methanocaldococcus jannaschii (strain ATCC 43067 / DSM 2661 / JAL-1 / JCM 10045 / NBRC 100440) (Methanococcus jannaschii), this protein is Prepilin peptidase EppA.